We begin with the raw amino-acid sequence, 272 residues long: uncharacterized protein (272 aa).

Lys-185 (schiff-base intermediate with substrate) is an active-site residue.

This sequence belongs to the DeoC/FbaB aldolase family.

This is an uncharacterized protein from Saccharolobus solfataricus (strain ATCC 35092 / DSM 1617 / JCM 11322 / P2) (Sulfolobus solfataricus).